Reading from the N-terminus, the 138-residue chain is Protein FAM136A (138 aa).

At A2 the chain carries N-acetylalanine. Residues T124 and T126 each carry the phosphothreonine modification.

Belongs to the FAM136 family.

The chain is Protein FAM136A (FAM136A) from Bos taurus (Bovine).